An 885-amino-acid polypeptide reads, in one-letter code: MKTTTAQPSPSTSDFSGHTPMMAQYLGLKANHPDTLLFYRMGDFYELFWADAEKAARLLDITLTQRGQSAGQPVVMCGVPFHAVDTYLARLIKLGESVAICEQVGEVGASKGPVERKVVRVVTPGTLTDSELLNDKSESLLLAVHAGTRNFCGLAWLSVTGAELRLAECPADALEAWIARIAPSELLYSAEVTPAFEQRLKAARAATPFTLSIRPAWQFDGGLGERKLSEQMGSNSLAAWNAESLANAHAAAAALLGYAEHTQGRALSHVQRLSVERDGDLVELPPTTRRNLELVQTLRGEDSPTLFSLLDTCMTGMGSRLLKRWLLSPRRDRGEAQARLEAIAALQSTVLGGTAAPWRTLREQLKNTSDVERIAARIALRQVRPRELLALRLALAKAEQLAPALPASGELLGGIIERLAPPSGCADLLASAIKPDPSALVRDGGVIATGHDAELDELRAISENCDDFLLKLEVSERERTGISNLRVQFNRVHGFYIEVTQSALSKVPDNYRRRQTLKNAERFITPELKAFEDKALSAQDRALAREKWLYEQLLDALQPSVPALTQLAGAIATLDALCALAERSHTLHWRAPSFVSHPCIEIQQGRHPVVEARLAEKSSGGFIANDTQLGPQQRMQVITGPNMGGKSTYMRQVAIIVLLASIGSHVPAAACRLGPIDAIHTRIGAADDLANAQSTFMLEMTEAAQILHSATAQSLVLMDEIGRGTSTFDGLALAAGIAAQLHDRSKAFTLFATHYFELTEFPATHHCAVNMHVSATEAGRDIVFLHEMQPGPASKSYGIQVARLAGMPAAVVNHARQALEALESQHAQTRAQVDLFAPPPAAETPMASAVESALAALDPDAMTPREALDALYALQKLNTRERGAA.

An ATP-binding site is contributed by 640 to 647; the sequence is GPNMGGKS.

Belongs to the DNA mismatch repair MutS family.

Functionally, this protein is involved in the repair of mismatches in DNA. It is possible that it carries out the mismatch recognition step. This protein has a weak ATPase activity. The protein is DNA mismatch repair protein MutS of Variovorax paradoxus (strain S110).